A 261-amino-acid chain; its full sequence is Kallikrein 1-related peptidase b26 (261 aa).

A signal peptide spans 1–18 (MWFLILFPALSLGGIDAA). Positions 19–24 (PPLQSR) are cleaved as a propeptide — activation peptide. Residues 25–258 (VVGGFNCEKN…FNSWIKDTMM (234 aa)) enclose the Peptidase S1 domain. 5 disulfide bridges follow: Cys-31–Cys-173, Cys-50–Cys-66, Cys-152–Cys-219, Cys-184–Cys-198, and Cys-209–Cys-234. His-65 acts as the Charge relay system in catalysis. A glycan (N-linked (GlcNAc...) asparagine) is linked at Asn-102. Asp-120 acts as the Charge relay system in catalysis. The active-site Charge relay system is the Ser-213.

Belongs to the peptidase S1 family. Kallikrein subfamily.

It carries out the reaction Preferential cleavage of Arg-|-Xaa bonds in small molecule substrates. Highly selective action to release kallidin (lysyl-bradykinin) from kininogen involves hydrolysis of Met-|-Xaa or Leu-|-Xaa.. Functionally, glandular kallikreins cleave Met-Lys and Arg-Ser bonds in kininogen to release Lys-bradykinin. Its function is as follows. Prorenin-converting enzyme cleaves mouse REN-2 prorenin at a dibasic site to yield mature renin. The polypeptide is Kallikrein 1-related peptidase b26 (Klk1b26) (Mus musculus (Mouse)).